We begin with the raw amino-acid sequence, 198 residues long: FMN-dependent NADH:quinone oxidoreductase (198 aa).

Residues Ser10, 16-18, 94-97, and 138-141 each bind FMN; these read SQS, MYNF, and TRGG.

The protein belongs to the azoreductase type 1 family. In terms of assembly, homodimer. The cofactor is FMN.

The enzyme catalyses 2 a quinone + NADH + H(+) = 2 a 1,4-benzosemiquinone + NAD(+). It carries out the reaction N,N-dimethyl-1,4-phenylenediamine + anthranilate + 2 NAD(+) = 2-(4-dimethylaminophenyl)diazenylbenzoate + 2 NADH + 2 H(+). Functionally, quinone reductase that provides resistance to thiol-specific stress caused by electrophilic quinones. Also exhibits azoreductase activity. Catalyzes the reductive cleavage of the azo bond in aromatic azo compounds to the corresponding amines. This Shewanella sp. (strain MR-4) protein is FMN-dependent NADH:quinone oxidoreductase.